A 180-amino-acid chain; its full sequence is Small ribosomal subunit protein uS4 (180 aa).

In terms of domain architecture, S4 RNA-binding spans 103-174; the sequence is RRLQTIVYKK…HPERMMIEKA (72 aa).

This sequence belongs to the universal ribosomal protein uS4 family. Part of the 30S ribosomal subunit. Contacts protein S5. The interaction surface between S4 and S5 is involved in control of translational fidelity.

One of the primary rRNA binding proteins, it binds directly to 16S rRNA where it nucleates assembly of the body of the 30S subunit. In terms of biological role, with S5 and S12 plays an important role in translational accuracy. The sequence is that of Small ribosomal subunit protein uS4 from Pyrococcus horikoshii (strain ATCC 700860 / DSM 12428 / JCM 9974 / NBRC 100139 / OT-3).